Here is a 338-residue protein sequence, read N- to C-terminus: Fructose-1,6-bisphosphatase class 1 (338 aa).

Mg(2+) is bound by residues Glu92, Asp115, Leu117, and Asp118. Substrate is bound by residues 118 to 121 (DGSS), Asn211, Tyr244, 262 to 264 (YLY), and Lys274. Glu280 contributes to the Mg(2+) binding site.

Belongs to the FBPase class 1 family. Homotetramer. It depends on Mg(2+) as a cofactor.

The protein resides in the cytoplasm. It catalyses the reaction beta-D-fructose 1,6-bisphosphate + H2O = beta-D-fructose 6-phosphate + phosphate. It functions in the pathway carbohydrate biosynthesis; gluconeogenesis. In Vibrio vulnificus (strain YJ016), this protein is Fructose-1,6-bisphosphatase class 1.